The primary structure comprises 250 residues: Testis-expressed protein 101 (250 aa).

The N-terminal stretch at 1–25 is a signal peptide; it reads MGACRIQYVLLIFLLIASRWTLVQN. N45, N110, N134, and N160 each carry an N-linked (GlcNAc...) asparagine glycan. The UPAR/Ly6 domain maps to 141–215; sequence CPTCVALGSC…VKETCSYQSF (75 aa). Residue G224 is the site of GPI-anchor amidated glycine attachment. The propeptide at 225 to 250 is removed in mature form; that stretch reads ASQMPTSLWVLELLFPLLLLPLTHFP.

Interacts with VAMP3. Interacts with LY6K. Interacts with DPEP3; co-localized on the cell surface of spermatocytes, spermatids, and testicular spermatozoa, co-localized only in cytoplasmic droplets of caput and corpus epididymal sperm. Interacts with ADAM3; co-localized on sperm surface. Interacts with ADAM5. Post-translationally, N-glycosylated; by high mannose and/or biantennary complex and/or certain types of hybrid oligosaccharides; possesses different oligosaccharides chains according to its subcellular localization in the testis. Sheds from membrane raft by ACE and released from the cell surface of epididymal sperm while it passes through the caput epididymis leading to disappearance of TEX101 on spermatozoa; is essential to produce fertile spermatozoa. In terms of tissue distribution, detected in testis and ovary. Expressed in spermatocytes, spermatids and testicular spermatozoa, but not in spermatogonia or interstitial cells. Expressed abundantly in testicular germ cells (TGCs) but mostly disappeared from epididymal spermatozoa.

The protein resides in the cell membrane. It localises to the membrane raft. It is found in the cytoplasmic vesicle. Its subcellular location is the secretory vesicle. The protein localises to the acrosome. The protein resides in the secreted. Functionally, plays a role in fertilization by controlling binding of sperm to zona pellucida and migration of spermatozoa into the oviduct probably through molecule adhesion ADAM3. May play a role in signal transduction and promote protein tyrosine phosphorylation. The sequence is that of Testis-expressed protein 101 from Mus musculus (Mouse).